Reading from the N-terminus, the 434-residue chain is GPI-anchor transamidase component PIGU (434 aa).

The Cytoplasmic segment spans residues 1–3 (MAA). A helical membrane pass occupies residues 4 to 22 (PLALVLVVAVTVRAALFRS). Topologically, residues 23–78 (SLAEFISERVEVVSPLSSWKRVVEGLALLDLGVSPYSGAVFHETPLIIYLFHFLID) are lumenal. The chain crosses the membrane as a helical span at residues 79–99 (YAELVFMITDALTAIALYFAI). Residues 100 to 136 (QDFNKVVFKKQKLLLELDQYAPDVAELIRTPMEMRYI) are Cytoplasmic-facing. Helical transmembrane passes span 137–157 (PLKV…VAKS), 158–177 (TCAI…IKGS), 178–193 (VFLS…YQSL), and 194–204 (YPVTLFAPGLL). Residues 205-221 (YLLQRQYIPVKVKSKAF) lie on the Cytoplasmic side of the membrane. Lysine 215 is an a cardiolipin binding site. Residues 222–243 (WIFSWEYAMMYTGSLVVIVCLS) form a helical membrane-spanning segment. Topologically, residues 244-285 (FFLLSSWDFIPAVYGFILSVPDLTPNIGLFWYFFAEMFEHFS) are lumenal. A helical transmembrane segment spans residues 286-305 (LFFVCVFQINVFFYTVPLAI). Residues 306–310 (KLKEH) are Cytoplasmic-facing. An a cardiolipin-binding site is contributed by lysine 308. 2 helical membrane passes run 311 to 330 (PIFF…SYPT) and 331 to 344 (VGDV…FPVW). Over 345 to 353 (NHLYRFLRN) the chain is Cytoplasmic. Residues 354 to 371 (IFVLTCIIIVCSLLFPVL) traverse the membrane as a helical segment. Over 372–383 (WHLWIYAGSANS) the chain is Lumenal. A 2-acyl-6-[6-phosphoethanolamine-alpha-D-mannosyl-(1-&gt;2)-6-phosphoethanolamine-alpha-D-mannosyl-(1-&gt;6)-2-phosphoethanolamine-alpha-D-mannosyl-(1-&gt;4)-alpha-D-glucosaminyl]-1-(1-radyl,2-acyl-sn-glycero-3-phospho)-1D-myo-inositol is bound by residues asparagine 382 and asparagine 384. A helical membrane pass occupies residues 384 to 405 (NFFYAITLTFNVGQILLISDYF). Residues 406 to 434 (YAFLRREYYLTHGLYLTAKDGTEAMLVLK) lie on the Cytoplasmic side of the membrane.

It belongs to the PIGU family. Heteropentamer. Part of the GPI-anchor transamidase complex, consisting of PIGK, PIGT, PIGS, PIGU and GAA1.

It localises to the endoplasmic reticulum membrane. The protein operates within glycolipid biosynthesis; glycosylphosphatidylinositol-anchor biosynthesis. In terms of biological role, component of the glycosylphosphatidylinositol-anchor (GPI-anchor) transamidase (GPI-T) complex that catalyzes the formation of the linkage between a proprotein and a GPI-anchor and participates in GPI anchored protein biosynthesis. Binds the lipid portion of GPI-anchor. May act as an organizer in the transmembrane layer to recruit other subunits, and thus is essential for assembly of the complex. In Mus musculus (Mouse), this protein is GPI-anchor transamidase component PIGU.